We begin with the raw amino-acid sequence, 393 residues long: Flavohemoprotein (393 aa).

The Globin domain occupies 1–139; the sequence is MLSAEHRAIV…LADLLIGLEE (139 aa). Histidine 85 is a heme b binding site. Active-site charge relay system residues include tyrosine 95 and glutamate 138. Residues 150–393 are reductase; the sequence is GGWRGTRAFV…EFFGPASALD (244 aa). Positions 153 to 256 constitute an FAD-binding FR-type domain; the sequence is RGTRAFVVAR…LTPSGDFTLE (104 aa). FAD-binding positions include tyrosine 191 and 205-208; that span reads RNYS. 268-273 serves as a coordination point for NADP(+); the sequence is GVGITP. FAD is bound at residue 385-388; it reads FFGP.

Belongs to the globin family. Two-domain flavohemoproteins subfamily. The protein in the C-terminal section; belongs to the flavoprotein pyridine nucleotide cytochrome reductase family. Heme b serves as cofactor. FAD is required as a cofactor.

It catalyses the reaction 2 nitric oxide + NADPH + 2 O2 = 2 nitrate + NADP(+) + H(+). The catalysed reaction is 2 nitric oxide + NADH + 2 O2 = 2 nitrate + NAD(+) + H(+). In terms of biological role, is involved in NO detoxification in an aerobic process, termed nitric oxide dioxygenase (NOD) reaction that utilizes O(2) and NAD(P)H to convert NO to nitrate, which protects the bacterium from various noxious nitrogen compounds. Therefore, plays a central role in the inducible response to nitrosative stress. The sequence is that of Flavohemoprotein from Burkholderia sp. (strain TH2).